A 779-amino-acid chain; its full sequence is Phosphoribosylformylglycinamidine synthase subunit PurL (779 aa).

The active site involves H52. Y55 and K94 together coordinate ATP. E96 serves as a coordination point for Mg(2+). Residues 97–100 (SHNH) and R119 each bind substrate. H98 acts as the Proton acceptor in catalysis. Mg(2+) is bound at residue D120. Q243 is a substrate binding site. D271 is a binding site for Mg(2+). 315-317 (ESQ) serves as a coordination point for substrate. ATP is bound by residues N523 and G560. N561 serves as a coordination point for Mg(2+). Residue S563 coordinates substrate.

It belongs to the FGAMS family. Monomer. Part of the FGAM synthase complex composed of 1 PurL, 1 PurQ and 2 PurS subunits.

The protein resides in the cytoplasm. The enzyme catalyses N(2)-formyl-N(1)-(5-phospho-beta-D-ribosyl)glycinamide + L-glutamine + ATP + H2O = 2-formamido-N(1)-(5-O-phospho-beta-D-ribosyl)acetamidine + L-glutamate + ADP + phosphate + H(+). Its pathway is purine metabolism; IMP biosynthesis via de novo pathway; 5-amino-1-(5-phospho-D-ribosyl)imidazole from N(2)-formyl-N(1)-(5-phospho-D-ribosyl)glycinamide: step 1/2. Functionally, part of the phosphoribosylformylglycinamidine synthase complex involved in the purines biosynthetic pathway. Catalyzes the ATP-dependent conversion of formylglycinamide ribonucleotide (FGAR) and glutamine to yield formylglycinamidine ribonucleotide (FGAM) and glutamate. The FGAM synthase complex is composed of three subunits. PurQ produces an ammonia molecule by converting glutamine to glutamate. PurL transfers the ammonia molecule to FGAR to form FGAM in an ATP-dependent manner. PurS interacts with PurQ and PurL and is thought to assist in the transfer of the ammonia molecule from PurQ to PurL. This chain is Phosphoribosylformylglycinamidine synthase subunit PurL, found in Prochlorococcus marinus (strain MIT 9215).